The primary structure comprises 66 residues: Pteroicidin-alpha (66 aa).

The signal sequence occupies residues 1–22 (MKCIALFLVLSMVVLMAEPGEA). Residue Arg43 is modified to Arginine amide; partial. A propeptide spanning residues 44 to 66 (GKNRDMAEQQELERAFDRERAFA) is cleaved from the precursor.

The protein belongs to the pleurocidin family. Post-translationally, this peptide exists in N-terminally amidated and non-amidated forms. The amidated form is more active and has a greater alpha-helix content than the non-amidated form. In terms of tissue distribution, expressed in gill, skin, intestine, spleen, anterior kidney, and blood cells.

It localises to the secreted. In terms of biological role, the amidated peptide is bactericidal on human pathogens like S.aureus or E.coli, as well as on the fish pathogen A.salmonicida. May also be active against a variety of fungi. It can kill bacteria in less than 30 minutes (S.aureus) and 120 minutes (V.vulnificus). It induces hemolysis of erythrocytes from human and fishes (sea bass and lesser-spotted dogfish). Functionally, the non-amidated peptide only inhibits growth of human pathogens like S.aureus or E.coli, and the fish pathogen A.salmonicida. Induces hemolysis of erythrocytes from human and fishes (sea bass and lesser-spotted dogfish). The sequence is that of Pteroicidin-alpha from Pterois volitans (Red lionfish).